The primary structure comprises 211 residues: Uracil phosphoribosyltransferase (211 aa).

Residues R78, R103, and 130-138 (DPMLATGGT) each bind 5-phospho-alpha-D-ribose 1-diphosphate. Uracil contacts are provided by residues I195 and 200 to 202 (GDA). Residue D201 participates in 5-phospho-alpha-D-ribose 1-diphosphate binding.

Belongs to the UPRTase family. Mg(2+) is required as a cofactor.

It carries out the reaction UMP + diphosphate = 5-phospho-alpha-D-ribose 1-diphosphate + uracil. It functions in the pathway pyrimidine metabolism; UMP biosynthesis via salvage pathway; UMP from uracil: step 1/1. Allosterically activated by GTP. Its function is as follows. Catalyzes the conversion of uracil and 5-phospho-alpha-D-ribose 1-diphosphate (PRPP) to UMP and diphosphate. In Paenarthrobacter aurescens (strain TC1), this protein is Uracil phosphoribosyltransferase.